We begin with the raw amino-acid sequence, 252 residues long: Imidazole glycerol phosphate synthase subunit HisF (252 aa).

Residues aspartate 11 and aspartate 130 contribute to the active site.

Belongs to the HisA/HisF family. As to quaternary structure, heterodimer of HisH and HisF.

The protein localises to the cytoplasm. The catalysed reaction is 5-[(5-phospho-1-deoxy-D-ribulos-1-ylimino)methylamino]-1-(5-phospho-beta-D-ribosyl)imidazole-4-carboxamide + L-glutamine = D-erythro-1-(imidazol-4-yl)glycerol 3-phosphate + 5-amino-1-(5-phospho-beta-D-ribosyl)imidazole-4-carboxamide + L-glutamate + H(+). It functions in the pathway amino-acid biosynthesis; L-histidine biosynthesis; L-histidine from 5-phospho-alpha-D-ribose 1-diphosphate: step 5/9. Its function is as follows. IGPS catalyzes the conversion of PRFAR and glutamine to IGP, AICAR and glutamate. The HisF subunit catalyzes the cyclization activity that produces IGP and AICAR from PRFAR using the ammonia provided by the HisH subunit. This Bacillus licheniformis (strain ATCC 14580 / DSM 13 / JCM 2505 / CCUG 7422 / NBRC 12200 / NCIMB 9375 / NCTC 10341 / NRRL NRS-1264 / Gibson 46) protein is Imidazole glycerol phosphate synthase subunit HisF.